Consider the following 239-residue polypeptide: Ribonuclease PH (239 aa).

Residues R86 and 124-126 each bind phosphate; that span reads GTR.

Belongs to the RNase PH family. As to quaternary structure, homohexameric ring arranged as a trimer of dimers.

The catalysed reaction is tRNA(n+1) + phosphate = tRNA(n) + a ribonucleoside 5'-diphosphate. Phosphorolytic 3'-5' exoribonuclease that plays an important role in tRNA 3'-end maturation. Removes nucleotide residues following the 3'-CCA terminus of tRNAs; can also add nucleotides to the ends of RNA molecules by using nucleoside diphosphates as substrates, but this may not be physiologically important. Probably plays a role in initiation of 16S rRNA degradation (leading to ribosome degradation) during starvation. The protein is Ribonuclease PH of Sinorhizobium fredii (strain NBRC 101917 / NGR234).